Reading from the N-terminus, the 458-residue chain is uncharacterized protein (458 aa).

Belongs to the MG032/MG096/MG288 family.

This is an uncharacterized protein from Mycoplasma pneumoniae (strain ATCC 29342 / M129 / Subtype 1) (Mycoplasmoides pneumoniae).